The sequence spans 369 residues: MSDNGQKKVIVGMSGGVDSSVSAWLLQQQGYRVEGLFMKNWEEDDNEEYCTAASDLADARAVCDTLGIALHTVNFAAEYWDNVFAHFLAEYQVGRTPNPDILCNKEIKFKAFLEFADDDLGADYIATGHYVRRADVNGKSRLLRGLDDNKDQSYFLYTLGHAQLARCLFPIGELAKPEVRRIAADLGLATAAKKDSTGICFIGERKFRDFLGRYLPVQPGAIVSVDGQEVGRHQGLMYHTLGQRKGLGIGGTRDGSEDPWYVVDKDLDHNRLIVAQGHQHPRLMSTGLTAGQLHWVEREPLTEALRCTVKIRYRQPDIACLVTPQADGRLQVTFDQPVTAVTPGQSAVFYLAERCLGGGIIEARQPLSH.

Residues 12–19 and methionine 38 contribute to the ATP site; that span reads GMSGGVDS. The segment at 98–100 is interaction with target base in tRNA; sequence NPD. The active-site Nucleophile is the cysteine 103. Cysteine 103 and cysteine 200 are oxidised to a cystine. Glycine 128 is a binding site for ATP. The segment at 150–152 is interaction with tRNA; sequence KDQ. Catalysis depends on cysteine 200, which acts as the Cysteine persulfide intermediate. The interval 312-313 is interaction with tRNA; that stretch reads RY.

The protein belongs to the MnmA/TRMU family. As to quaternary structure, interacts with TusE.

It is found in the cytoplasm. It carries out the reaction S-sulfanyl-L-cysteinyl-[protein] + uridine(34) in tRNA + AH2 + ATP = 2-thiouridine(34) in tRNA + L-cysteinyl-[protein] + A + AMP + diphosphate + H(+). In terms of biological role, catalyzes the 2-thiolation of uridine at the wobble position (U34) of tRNA(Lys), tRNA(Glu) and tRNA(Gln), leading to the formation of s(2)U34, the first step of tRNA-mnm(5)s(2)U34 synthesis. Sulfur is provided by IscS, via a sulfur-relay system. Binds ATP and its substrate tRNAs. This chain is tRNA-specific 2-thiouridylase MnmA, found in Sodalis glossinidius (strain morsitans).